The sequence spans 71 residues: Conotoxin Bu24 (71 aa).

Residues 1–21 (MGMRMMVTVFLLVVLATTVVS) form the signal peptide. Residues 22–44 (LRSNRASDGRRGIVNKLNDLVPK) constitute a propeptide that is removed on maturation. Asn-70 carries the post-translational modification Asparagine amide.

This sequence belongs to the conotoxin A superfamily. In terms of processing, contains 3 disulfide bonds. They are not indicated here, since framework IV presents two different connectivities (I-V, II-III, IV-VI and I-III, II-V, IV-VI). In terms of tissue distribution, expressed by the venom duct.

The protein resides in the secreted. In Conus bullatus (Bubble cone), this protein is Conotoxin Bu24.